Consider the following 230-residue polypeptide: Flagellar L-ring protein (230 aa).

The first 22 residues, 1-22 (MSPISNFARIALACTVAALLGG), serve as a signal peptide directing secretion. The N-palmitoyl cysteine moiety is linked to residue Cys-23. Residue Cys-23 is the site of S-diacylglycerol cysteine attachment.

The protein belongs to the FlgH family. The basal body constitutes a major portion of the flagellar organelle and consists of four rings (L,P,S, and M) mounted on a central rod.

The protein localises to the cell outer membrane. Its subcellular location is the bacterial flagellum basal body. Functionally, assembles around the rod to form the L-ring and probably protects the motor/basal body from shearing forces during rotation. In Stenotrophomonas maltophilia (strain K279a), this protein is Flagellar L-ring protein.